We begin with the raw amino-acid sequence, 266 residues long: Ribonuclease HII (266 aa).

The 194-residue stretch at 73–266 folds into the RNase H type-2 domain; it reads SPVAGVDEAG…NCGSRQKCEG (194 aa). Positions 79, 80, and 173 each coordinate a divalent metal cation.

Belongs to the RNase HII family. The cofactor is Mn(2+). Mg(2+) serves as cofactor.

It is found in the cytoplasm. It carries out the reaction Endonucleolytic cleavage to 5'-phosphomonoester.. Functionally, endonuclease that specifically degrades the RNA of RNA-DNA hybrids. The sequence is that of Ribonuclease HII from Pelotomaculum thermopropionicum (strain DSM 13744 / JCM 10971 / SI).